We begin with the raw amino-acid sequence, 290 residues long: 30 kDa spicule matrix protein alpha (290 aa).

Residues 1 to 20 (MRGFVYVLVCVLALASFSRA) form the signal peptide. The region spanning 92–162 (ANMYCGQMHP…YTNWERMTAP (71 aa)) is the C-type lectin domain. Asn102 is a glycosylation site (N-linked (GlcNAc...) asparagine).

In terms of tissue distribution, accumulates exclusively in mineralized tissues.

In terms of biological role, matrix protein of the sea urchin embryo spicule. The function of the matrix proteins is to direct crystal growth in certain orientations and inhibit growth in others. The chain is 30 kDa spicule matrix protein alpha (SM30A) from Strongylocentrotus purpuratus (Purple sea urchin).